The chain runs to 494 residues: Splicing regulatory glutamine/lysine-rich protein 1 (494 aa).

The 77-residue stretch at 69–145 (RTVYVGNLNS…RPLKINHSNN (77 aa)) folds into the RRM domain. A phosphoserine mark is found at Ser-174 and Ser-187. Residues 176-494 (ISAAIEPESG…ESPCSKADAV (319 aa)) are disordered. Over residues 183-192 (ESGKSNERKG) the composition is skewed to basic and acidic residues. Over residues 193 to 262 (GRSRSHTRSK…KSRSRSRSRD (70 aa)) the composition is skewed to basic residues. Residues 263-340 (KRKDTREKVK…DRSKETDEKR (78 aa)) are compositionally biased toward basic and acidic residues. Phosphothreonine is present on Thr-348. Positions 357–373 (RRSRSTSRERRRRRSRS) are enriched in basic residues. The segment covering 404-474 (REKERDHISD…SPRTEDEGKV (71 aa)) has biased composition (basic and acidic residues). Polar residues predominate over residues 476–486 (HNGNCQPNEES). A Glycyl lysine isopeptide (Lys-Gly) (interchain with G-Cter in SUMO2) cross-link involves residue Lys-490.

The protein belongs to the splicing factor SR family. In terms of assembly, homodimer. Binds SFRS1, SFRS2, SFRS3 and SFRS6. Interacts with the spliceosome. Interacts with SREK1IP1.

It localises to the nucleus. In terms of biological role, participates in the regulation of alternative splicing by modulating the activity of other splice facors. Inhibits the splicing activity of SFRS1, SFRS2 and SFRS6. Augments the splicing activity of SFRS3. The sequence is that of Splicing regulatory glutamine/lysine-rich protein 1 (Srek1) from Mus musculus (Mouse).